The sequence spans 315 residues: Acetyl-coenzyme A carboxylase carboxyl transferase subunit alpha (315 aa).

The CoA carboxyltransferase C-terminal domain maps to 32 to 289; that stretch reads EIDMLEASLE…KEAFTKQLSE (258 aa).

It belongs to the AccA family. In terms of assembly, acetyl-CoA carboxylase is a heterohexamer composed of biotin carboxyl carrier protein (AccB), biotin carboxylase (AccC) and two subunits each of ACCase subunit alpha (AccA) and ACCase subunit beta (AccD).

The protein localises to the cytoplasm. The enzyme catalyses N(6)-carboxybiotinyl-L-lysyl-[protein] + acetyl-CoA = N(6)-biotinyl-L-lysyl-[protein] + malonyl-CoA. Its pathway is lipid metabolism; malonyl-CoA biosynthesis; malonyl-CoA from acetyl-CoA: step 1/1. Component of the acetyl coenzyme A carboxylase (ACC) complex. First, biotin carboxylase catalyzes the carboxylation of biotin on its carrier protein (BCCP) and then the CO(2) group is transferred by the carboxyltransferase to acetyl-CoA to form malonyl-CoA. The chain is Acetyl-coenzyme A carboxylase carboxyl transferase subunit alpha from Staphylococcus carnosus (strain TM300).